We begin with the raw amino-acid sequence, 217 residues long: Small ribosomal subunit protein uS3 (217 aa).

In terms of domain architecture, KH type-2 spans 38–106 (IRNFIKKELA…QVHINIIEIK (69 aa)).

It belongs to the universal ribosomal protein uS3 family. In terms of assembly, part of the 30S ribosomal subunit. Forms a tight complex with proteins S10 and S14.

Functionally, binds the lower part of the 30S subunit head. Binds mRNA in the 70S ribosome, positioning it for translation. The protein is Small ribosomal subunit protein uS3 of Streptococcus suis (strain 98HAH33).